Reading from the N-terminus, the 985-residue chain is Alpha-glucosidase (985 aa).

The N-terminal stretch at 1-25 (MVKLTHLLARAWLVPLAYGASQSLL) is a signal peptide. A glycan (O-linked (Man) threonine) is linked at T36. 5 N-linked (GlcNAc...) asparagine glycosylation sites follow: N124, N143, N218, N347, and N422. The Nucleophile role is filled by D490. E493 is a catalytic residue. N-linked (GlcNAc...) asparagine glycosylation is found at N506, N534, and N537. O-linked (Man) serine glycosylation is found at S545 and S550. The O-linked (Man) threonine glycan is linked to T559. An O-linked (Man) serine glycan is attached at S560. O-linked (Man) threonine glycosylation occurs at T561. S562 carries O-linked (Man) serine glycosylation. O-linked (Man) threonine glycosylation occurs at T571. Residues N601 and N623 are each glycosylated (N-linked (GlcNAc...) asparagine). The Proton donor role is filled by D660. N-linked (GlcNAc...) asparagine glycosylation is found at N835 and N881. Residue S895 is glycosylated (O-linked (Man) serine). Residues N899, N957, and N970 are each glycosylated (N-linked (GlcNAc...) asparagine).

Belongs to the glycosyl hydrolase 31 family. In terms of processing, the O-linked saccharide is not identified, but is probably mannose.

The catalysed reaction is Hydrolysis of terminal, non-reducing (1-&gt;4)-linked alpha-D-glucose residues with release of alpha-D-glucose.. Functionally, hydrolyzes malto-oligosaccharides, but has a low activity toward soluble starch. The protein is Alpha-glucosidase (aglA) of Aspergillus niger.